The following is a 108-amino-acid chain: NADH dehydrogenase [ubiquinone] 1 alpha subcomplex subunit 8-A (108 aa).

2 CHCH domains span residues 28 to 69 (GIRC…LKDL) and 70 to 108 (HQRC…CPLK). 3 short sequence motifs (cx9C motif) span residues 31 to 41 (CMPENMAFLKC), 51 to 61 (CLEKGRDVTRC), and 73 to 83 (CPKEMDAYVGC). 4 disulfides stabilise this stretch: C31–C61, C41–C51, C73–C105, and C83–C94. The Cx10C motif signature appears at 94–105 (CRKEQEAFEKVC).

Belongs to the complex I NDUFA8 subunit family. Complex I is composed of at least 49 different subunits.

Its subcellular location is the mitochondrion. It is found in the mitochondrion intermembrane space. Functionally, accessory subunit of the mitochondrial membrane respiratory chain NADH dehydrogenase (Complex I), that is believed not to be involved in catalysis. Complex I functions in the transfer of electrons from NADH to the respiratory chain. The immediate electron acceptor for the enzyme is believed to be ubiquinone. This is NADH dehydrogenase [ubiquinone] 1 alpha subcomplex subunit 8-A from Arabidopsis thaliana (Mouse-ear cress).